An 80-amino-acid polypeptide reads, in one-letter code: Small ribosomal subunit protein bS18 (80 aa).

Belongs to the bacterial ribosomal protein bS18 family. As to quaternary structure, part of the 30S ribosomal subunit. Forms a tight heterodimer with protein bS6.

Functionally, binds as a heterodimer with protein bS6 to the central domain of the 16S rRNA, where it helps stabilize the platform of the 30S subunit. This Beijerinckia indica subsp. indica (strain ATCC 9039 / DSM 1715 / NCIMB 8712) protein is Small ribosomal subunit protein bS18.